A 217-amino-acid polypeptide reads, in one-letter code: TPA-induced transmembrane protein (217 aa).

The segment at 1–37 (MDLAQPSQPVDELELSVLERQPEENTPLNGADKVFPS) is disordered. A helical membrane pass occupies residues 66 to 86 (LWMIITSIFLGVITVIIIGLC).

Interacts with LIPH. In terms of tissue distribution, detected predominantly in the skin, with strongest expression in the inner root sheath of the hair follicle.

It localises to the endoplasmic reticulum. It is found in the cell membrane. In terms of biological role, has a role in LIPH-mediated synthesis of 2-acyl lysophosphatidic acid (LPA). LPA is a bioactive lipid mediator involved in different biological processes, and necessary to promote hair formation and growth. This is TPA-induced transmembrane protein (TTMP) from Homo sapiens (Human).